Reading from the N-terminus, the 384-residue chain is Histidinol-phosphate aminotransferase 1 (384 aa).

Position 233 is an N6-(pyridoxal phosphate)lysine (Lys233).

This sequence belongs to the class-II pyridoxal-phosphate-dependent aminotransferase family. Histidinol-phosphate aminotransferase subfamily. Homodimer. Pyridoxal 5'-phosphate is required as a cofactor.

The enzyme catalyses L-histidinol phosphate + 2-oxoglutarate = 3-(imidazol-4-yl)-2-oxopropyl phosphate + L-glutamate. It participates in amino-acid biosynthesis; L-histidine biosynthesis; L-histidine from 5-phospho-alpha-D-ribose 1-diphosphate: step 7/9. The protein is Histidinol-phosphate aminotransferase 1 of Thiobacillus denitrificans (strain ATCC 25259 / T1).